The sequence spans 880 residues: Valine--tRNA ligase (880 aa).

The 'HIGH' region signature appears at 49-59; it reads PNVTGKLHLGH. The short motif at 525–529 is the 'KMSKS' region element; that stretch reads KMSKS. Residue K528 participates in ATP binding. Positions 809–880 form a coiled coil; the sequence is LEGLINIEEE…VKARLAELKR (72 aa).

Belongs to the class-I aminoacyl-tRNA synthetase family. ValS type 1 subfamily. Monomer.

The protein localises to the cytoplasm. The catalysed reaction is tRNA(Val) + L-valine + ATP = L-valyl-tRNA(Val) + AMP + diphosphate. In terms of biological role, catalyzes the attachment of valine to tRNA(Val). As ValRS can inadvertently accommodate and process structurally similar amino acids such as threonine, to avoid such errors, it has a 'posttransfer' editing activity that hydrolyzes mischarged Thr-tRNA(Val) in a tRNA-dependent manner. This chain is Valine--tRNA ligase, found in Geobacillus kaustophilus (strain HTA426).